Here is a 503-residue protein sequence, read N- to C-terminus: UDP-N-acetylmuramoylalanine--D-glutamate ligase (503 aa).

Residue 129–135 (GTNGKTT) coordinates ATP. The tract at residues 284–305 (DSEAEGEGKPRRRKADATAQEA) is disordered.

It belongs to the MurCDEF family.

Its subcellular location is the cytoplasm. It carries out the reaction UDP-N-acetyl-alpha-D-muramoyl-L-alanine + D-glutamate + ATP = UDP-N-acetyl-alpha-D-muramoyl-L-alanyl-D-glutamate + ADP + phosphate + H(+). It participates in cell wall biogenesis; peptidoglycan biosynthesis. Cell wall formation. Catalyzes the addition of glutamate to the nucleotide precursor UDP-N-acetylmuramoyl-L-alanine (UMA). This chain is UDP-N-acetylmuramoylalanine--D-glutamate ligase, found in Cupriavidus pinatubonensis (strain JMP 134 / LMG 1197) (Cupriavidus necator (strain JMP 134)).